Reading from the N-terminus, the 405-residue chain is Nicotinate phosphoribosyltransferase (405 aa).

A Phosphohistidine; by autocatalysis modification is found at histidine 230.

The protein belongs to the NAPRTase family. In terms of processing, transiently phosphorylated on a His residue during the reaction cycle. Phosphorylation strongly increases the affinity for substrates and increases the rate of nicotinate D-ribonucleotide production. Dephosphorylation regenerates the low-affinity form of the enzyme, leading to product release.

It catalyses the reaction nicotinate + 5-phospho-alpha-D-ribose 1-diphosphate + ATP + H2O = nicotinate beta-D-ribonucleotide + ADP + phosphate + diphosphate. Its pathway is cofactor biosynthesis; NAD(+) biosynthesis; nicotinate D-ribonucleotide from nicotinate: step 1/1. Functionally, catalyzes the synthesis of beta-nicotinate D-ribonucleotide from nicotinate and 5-phospho-D-ribose 1-phosphate at the expense of ATP. The chain is Nicotinate phosphoribosyltransferase from Bordetella pertussis (strain Tohama I / ATCC BAA-589 / NCTC 13251).